Consider the following 440-residue polypeptide: D-serine dehydratase (440 aa).

N6-(pyridoxal phosphate)lysine is present on lysine 116.

This sequence belongs to the serine/threonine dehydratase family. DsdA subfamily. As to quaternary structure, monomer. Requires pyridoxal 5'-phosphate as cofactor.

The catalysed reaction is D-serine = pyruvate + NH4(+). This is D-serine dehydratase from Salmonella paratyphi A (strain ATCC 9150 / SARB42).